The primary structure comprises 110 residues: UPF0122 protein STER_0914 (110 aa).

It belongs to the UPF0122 family.

In terms of biological role, might take part in the signal recognition particle (SRP) pathway. This is inferred from the conservation of its genetic proximity to ftsY/ffh. May be a regulatory protein. This Streptococcus thermophilus (strain ATCC BAA-491 / LMD-9) protein is UPF0122 protein STER_0914.